The sequence spans 279 residues: Phosphate import ATP-binding protein PstB 2 (279 aa).

Residues 34–274 (FDIENLDLYY…PSDDRTRGYV (241 aa)) form the ABC transporter domain. Position 66 to 73 (66 to 73 (GPSGCGKS)) interacts with ATP.

This sequence belongs to the ABC transporter superfamily. Phosphate importer (TC 3.A.1.7) family. As to quaternary structure, the complex is composed of two ATP-binding proteins (PstB), two transmembrane proteins (PstC and PstA) and a solute-binding protein (PstS).

It is found in the cell inner membrane. It carries out the reaction phosphate(out) + ATP + H2O = ADP + 2 phosphate(in) + H(+). In terms of biological role, part of the ABC transporter complex PstSACB involved in phosphate import. Responsible for energy coupling to the transport system. This chain is Phosphate import ATP-binding protein PstB 2, found in Vibrio vulnificus (strain YJ016).